Consider the following 273-residue polypeptide: Hydroxyethylthiazole kinase (273 aa).

Residue M49 coordinates substrate. ATP is bound by residues K125 and T171. G198 is a substrate binding site.

The protein belongs to the Thz kinase family. Mg(2+) is required as a cofactor.

It carries out the reaction 5-(2-hydroxyethyl)-4-methylthiazole + ATP = 4-methyl-5-(2-phosphooxyethyl)-thiazole + ADP + H(+). Its pathway is cofactor biosynthesis; thiamine diphosphate biosynthesis; 4-methyl-5-(2-phosphoethyl)-thiazole from 5-(2-hydroxyethyl)-4-methylthiazole: step 1/1. Its function is as follows. Catalyzes the phosphorylation of the hydroxyl group of 4-methyl-5-beta-hydroxyethylthiazole (THZ). The protein is Hydroxyethylthiazole kinase of Natranaerobius thermophilus (strain ATCC BAA-1301 / DSM 18059 / JW/NM-WN-LF).